We begin with the raw amino-acid sequence, 492 residues long: MTDLTSLTLAEARDGLANKSFTAVELTDAHLAAIEAARVLNAYVLETPDQARQMAKAADAQIAKGEGGPLAGLPLGIKDLFATKGERTTACSKILGDFKPTYESTVTTQLWRDGAVLLGKLNNDEFAMGSSNETSCFGPVINPWRRAGSDAKLVPGGSSGGSAAAVAAGLCLGATATDTGGSIRQPAAFTGTVGIKPTYGRCSRWGIVAFASSLDQAGPIARTVRDSAILLRSMAGHDPKDTTSVDRPVPNYEAAVGGSVKGMKIGIPKEYRLDGMPAEIEKLWSQGAEWLKAAGAELVEVSLPHTKYALPAYYIVAPAEASSNLARYDGVRYGARVNGRNIIEMYENTRAAGFGAEVKRRIMIGTYVLSAGYYDAYYLRAQKVRTLIKRDFEQCFDQGVSAILTPATPSAAFGIGEKGGADPVEMYLNDIFTVTVNMAGLPGIAVPAGSDSQGLPLGLQLIGRPFDEDTLFSLGEVIEQAAGRFTPAKWWA.

Active-site charge relay system residues include Lys78 and Ser158. Catalysis depends on Ser182, which acts as the Acyl-ester intermediate.

The protein belongs to the amidase family. GatA subfamily. Heterotrimer of A, B and C subunits.

It catalyses the reaction L-glutamyl-tRNA(Gln) + L-glutamine + ATP + H2O = L-glutaminyl-tRNA(Gln) + L-glutamate + ADP + phosphate + H(+). Functionally, allows the formation of correctly charged Gln-tRNA(Gln) through the transamidation of misacylated Glu-tRNA(Gln) in organisms which lack glutaminyl-tRNA synthetase. The reaction takes place in the presence of glutamine and ATP through an activated gamma-phospho-Glu-tRNA(Gln). The protein is Glutamyl-tRNA(Gln) amidotransferase subunit A of Rhodopseudomonas palustris (strain ATCC BAA-98 / CGA009).